The sequence spans 384 residues: Dual-specificity RNA methyltransferase RlmN (384 aa).

Catalysis depends on E105, which acts as the Proton acceptor. A Radical SAM core domain is found at 111–350 (EDDRATLCVS…TIVRKTRGDD (240 aa)). A disulfide bridge connects residues C118 and C355. [4Fe-4S] cluster contacts are provided by C125, C129, and C132. Residues 179–180 (GE), S211, 233–235 (SLH), and N312 contribute to the S-adenosyl-L-methionine site. C355 (S-methylcysteine intermediate) is an active-site residue.

Belongs to the radical SAM superfamily. RlmN family. The cofactor is [4Fe-4S] cluster.

The protein localises to the cytoplasm. It catalyses the reaction adenosine(2503) in 23S rRNA + 2 reduced [2Fe-2S]-[ferredoxin] + 2 S-adenosyl-L-methionine = 2-methyladenosine(2503) in 23S rRNA + 5'-deoxyadenosine + L-methionine + 2 oxidized [2Fe-2S]-[ferredoxin] + S-adenosyl-L-homocysteine. The enzyme catalyses adenosine(37) in tRNA + 2 reduced [2Fe-2S]-[ferredoxin] + 2 S-adenosyl-L-methionine = 2-methyladenosine(37) in tRNA + 5'-deoxyadenosine + L-methionine + 2 oxidized [2Fe-2S]-[ferredoxin] + S-adenosyl-L-homocysteine. In terms of biological role, specifically methylates position 2 of adenine 2503 in 23S rRNA and position 2 of adenine 37 in tRNAs. m2A2503 modification seems to play a crucial role in the proofreading step occurring at the peptidyl transferase center and thus would serve to optimize ribosomal fidelity. The polypeptide is Dual-specificity RNA methyltransferase RlmN (Shigella boydii serotype 18 (strain CDC 3083-94 / BS512)).